We begin with the raw amino-acid sequence, 137 residues long: ATP synthase epsilon chain, sodium ion specific (137 aa).

It belongs to the ATPase epsilon chain family. As to quaternary structure, F-type ATPases have 2 components, CF(1) - the catalytic core - and CF(0) - the membrane proton channel. CF(1) has five subunits: alpha(3), beta(3), gamma(1), delta(1), epsilon(1). CF(0) has three main subunits: a, b and c.

It localises to the cell inner membrane. Its function is as follows. Produces ATP from ADP in the presence of a sodium gradient across the membrane. In Propionigenium modestum, this protein is ATP synthase epsilon chain, sodium ion specific (atpC).